Reading from the N-terminus, the 444-residue chain is Na(+)/H(+) antiporter NhaA 2 (444 aa).

The next 11 helical transmembrane spans lie at 21–41 (FSGIFLFFCAVSAMIVANSPF), 64–84 (FSIHDWINDVLMSIFFLMVGL), 102–122 (AFPVIGAVGGMIVPGVIYYVL), 131–151 (GFGIPMATDIAFALGVILLLG), 160–180 (VFLVTLAVADDLGAIVVIAVF), 185–205 (EGLHFIYLGVAAGLLILLTGI), 212–232 (HLGVYIGIGILLWFCVHHSGI), 307–327 (ALQPLCAFIIMPLFAFANAGV), 342–362 (LGVILGLVVGKPLGILSLTFL), 377–397 (WSHIFGAGMLAGIGFTMSMFV), and 413–433 (IAILLASSIAGIVGSLYLIIN).

This sequence belongs to the NhaA Na(+)/H(+) (TC 2.A.33) antiporter family.

Its subcellular location is the cell inner membrane. It catalyses the reaction Na(+)(in) + 2 H(+)(out) = Na(+)(out) + 2 H(+)(in). Its function is as follows. Na(+)/H(+) antiporter that extrudes sodium in exchange for external protons. This is Na(+)/H(+) antiporter NhaA 2 from Helicobacter hepaticus (strain ATCC 51449 / 3B1).